Consider the following 579-residue polypeptide: Nuclear hormone receptor family member nhr-71 (579 aa).

A DNA-binding region (nuclear receptor) is located at residues 8–83; that stretch reads SQECMVCSAP…AGMKIGAVQP (76 aa). NR C4-type zinc fingers lie at residues 11–31 and 47–71; these read CMVC…CRSC and CKHT…FTKC. Disordered regions lie at residues 82 to 124 and 168 to 189; these read QPRR…SDGP and EPIP…PNDD. 2 stretches are compositionally biased toward polar residues: residues 106–124 and 171–186; these read SMNN…SDGP and PSTS…QSSP. The region spanning 189-452 is the NR LBD domain; it reads DEQQEFNHLV…KFWYETLCYA (264 aa).

The protein belongs to the nuclear hormone receptor family.

It is found in the nucleus. Its function is as follows. Orphan nuclear receptor. The chain is Nuclear hormone receptor family member nhr-71 (nhr-71) from Caenorhabditis elegans.